Consider the following 688-residue polypeptide: PTS system glucoside-specific EIICBA component (688 aa).

One can recognise a PTS EIIC type-1 domain in the interval 3-427 (KKLFGQLQRI…FKLKTPGRED (425 aa)). Helical transmembrane passes span 12–32 (IGKALMLPVAILPAAGILLAF), 81–101 (LGLAGGDGVAALAALVGYLIM), 137–157 (LVLGIPTLQTGVFGGIIMGAL), 182–202 (FVPIVTSVVAIATGVLLSFAW), 223–243 (LTTFIFGIIERSLIPFGLHHI), 284–304 (AFTTGKYPFMMFGLPAAAFAI), 315–335 (VVGGLMLSAGLTAFLTGITEP), 340–360 (FLFVAPVLYGIHVLLAGTSFL), 364–384 (LLGVKIGMTFSGGFIDYILYG), and 395–415 (LVIPVGIVYAIVYYFLFDFAI). Positions 438–519 (AKLPFDVLDA…AKIMSGEITK (82 aa)) constitute a PTS EIIB type-1 domain. Cys460 serves as the catalytic Phosphocysteine intermediate; for EIIB activity. Positions 560–664 (DQVFAGKMMG…SIVTPMIITN (105 aa)) constitute a PTS EIIA type-1 domain. Catalysis depends on His612, which acts as the Tele-phosphohistidine intermediate; for EIIA activity.

The protein localises to the cell membrane. Functionally, the phosphoenolpyruvate-dependent sugar phosphotransferase system (sugar PTS), a major carbohydrate active -transport system, catalyzes the phosphorylation of incoming sugar substrates concomitantly with their translocation across the cell membrane. This system is involved in alpha- and beta-glucoside transport. The chain is PTS system glucoside-specific EIICBA component (glcB) from Staphylococcus aureus (strain Mu3 / ATCC 700698).